Reading from the N-terminus, the 453-residue chain is Allantoinase (453 aa).

Zn(2+) contacts are provided by His59, His61, Lys146, His186, His242, and Asp315. Lys146 is subject to N6-carboxylysine.

This sequence belongs to the metallo-dependent hydrolases superfamily. Allantoinase family. In terms of assembly, homotetramer. The cofactor is Zn(2+). Carboxylation allows a single lysine to coordinate two zinc ions.

It carries out the reaction (S)-allantoin + H2O = allantoate + H(+). It participates in nitrogen metabolism; (S)-allantoin degradation; allantoate from (S)-allantoin: step 1/1. Its function is as follows. Catalyzes the conversion of allantoin (5-ureidohydantoin) to allantoic acid by hydrolytic cleavage of the five-member hydantoin ring. This Escherichia coli (strain SMS-3-5 / SECEC) protein is Allantoinase.